A 241-amino-acid polypeptide reads, in one-letter code: Uridylate kinase (241 aa).

9-10 contacts ATP; sequence GS. Gly44 provides a ligand contact to UMP. The ATP site is built by Gly45 and Arg49. Residues Asp66 and 114–120 each bind UMP; that span reads VTPGQTT. ATP-binding residues include Thr140, Tyr146, and Asp149. A disordered region spans residues 222-241; it reads TDVIPTGSEEPIYWTGSSDA.

This sequence belongs to the UMP kinase family. In terms of assembly, homohexamer.

It is found in the cytoplasm. The catalysed reaction is UMP + ATP = UDP + ADP. It participates in pyrimidine metabolism; CTP biosynthesis via de novo pathway; UDP from UMP (UMPK route): step 1/1. Inhibited by UTP. In terms of biological role, catalyzes the reversible phosphorylation of UMP to UDP. The chain is Uridylate kinase from Halorubrum lacusprofundi (strain ATCC 49239 / DSM 5036 / JCM 8891 / ACAM 34).